The sequence spans 360 residues: DNA replication and repair protein RecF (360 aa).

30-37 (GQNGSGKT) provides a ligand contact to ATP.

This sequence belongs to the RecF family.

Its subcellular location is the cytoplasm. Its function is as follows. The RecF protein is involved in DNA metabolism; it is required for DNA replication and normal SOS inducibility. RecF binds preferentially to single-stranded, linear DNA. It also seems to bind ATP. The protein is DNA replication and repair protein RecF of Shewanella oneidensis (strain ATCC 700550 / JCM 31522 / CIP 106686 / LMG 19005 / NCIMB 14063 / MR-1).